Here is an 883-residue protein sequence, read N- to C-terminus: MRFTRLSLSNFKCYADAAVSLDPGVTVIHGLNGSGKSSLLDACFFALYGTTALDTTLADAVTIGAETAEIDLHFEHAGGDYHVHRRIRASGGRAQTAACVLETPTDRIDGVTDVEAHISGLLRMDAEAFVNCAYVRQGEVNKLINAAPSTRQDMIDALLQLGKLEEYRQRAGDARLGVEDVKSNVEGQLDRLADQIADKEAADPHDRLASHNTALAEVTADIEHFEAEREQARQTRDDAADVLERYEESRTALADVEETIADVREAVAEAERERETLADRVSDHRERASDLDDEAAALAADLGLDDPDAEDASAERDAVADQREAVAERVREVAPAVSRLTEQADSAADDAATLDERAETLREEAAALDAEADDAAAKRDDAAARIEALDADIEAAMAAFDDAPVAFGAAEAFLDDATAERDELRERVATLRADRQSAADRVAEAEALLDEGKCPECGQPVEGAPHVERVTDDRERVAELDAELADVEDELDAVAQRVDRGESLVAAEDRVDDLEQQRERAVERRDEQADIADAKRDQAAEKRDRAADLDAEAEDARADAAAKRDAADEKRETLAALNADQTALKERLDALADLVDRLEAAADAREAAQRLAEKRAALAAQNEQRRDRLSELRERKRTLDSEFDADRIETARADKDRAEDYLEQVEPKLQALREDRDDLQAKIGAAENAIAELESLREEHERVQSRHQDLQAVHDEVTALETMYGELRAELRQQNVSKLERLLNETFELVYQNDSYARIELSGEYELTVYQKDGEPLEPAQLSGGERALFNLSLRTAVYRLLAEGIEGDAPLPPLILDEPTVFLDSGHVSQLVELVESMRRLGVEQIVVVSHDDELVAAADDVVRVAKDATSNRSRVSTPEHI.

ATP contacts are provided by residues Lys-12, 32 to 38, and Gln-137; that span reads NGSGKSS. Residues 244 to 283 adopt a coiled-coil conformation; it reads ERYEESRTALADVEETIADVREAVAEAERERETLADRVSD. Disordered stretches follow at residues 271 to 290 and 305 to 326; these read ERER…RASD and DDPD…REAV. Over residues 313–326 the composition is skewed to basic and acidic residues; it reads SAERDAVADQREAV. Coiled coils occupy residues 336 to 389 and 414 to 452; these read AVSR…IEAL and LDDA…LDEG. Residues 407–506 enclose the Zinc-hook domain; it reads FGAAEAFLDD…RVDRGESLVA (100 aa). Positions 454 and 457 each coordinate Zn(2+). The interval 508-565 is disordered; the sequence is EDRVDDLEQQRERAVERRDEQADIADAKRDQAAEKRDRAADLDAEAEDARADAAAKRD. Coiled-coil stretches lie at residues 571 to 604 and 668 to 720; these read RETL…AADA and KLQA…VTAL.

This sequence belongs to the SMC family. RAD50 subfamily. Homodimer. Forms a heterotetramer composed of two Mre11 subunits and two Rad50 subunits. Zn(2+) serves as cofactor.

In terms of biological role, part of the Rad50/Mre11 complex, which is involved in the early steps of DNA double-strand break (DSB) repair. Rad50 controls the balance between DNA end bridging and DNA resection via ATP-dependent structural rearrangements of the Rad50/Mre11 complex. This is DNA double-strand break repair Rad50 ATPase from Halobacterium salinarum (strain ATCC 700922 / JCM 11081 / NRC-1) (Halobacterium halobium).